The sequence spans 271 residues: Formamidopyrimidine-DNA glycosylase (271 aa).

Pro2 functions as the Schiff-base intermediate with DNA in the catalytic mechanism. Glu3 serves as the catalytic Proton donor. Lys56 acts as the Proton donor; for beta-elimination activity in catalysis. DNA is bound by residues His89, Arg107, and Lys151. An FPG-type zinc finger spans residues 236–270 (NVYGRAGLQCRQCGTPVRLSRQGQRSTYFCPHCQR). Arg260 serves as the catalytic Proton donor; for delta-elimination activity.

This sequence belongs to the FPG family. In terms of assembly, monomer. Zn(2+) is required as a cofactor.

It carries out the reaction Hydrolysis of DNA containing ring-opened 7-methylguanine residues, releasing 2,6-diamino-4-hydroxy-5-(N-methyl)formamidopyrimidine.. It catalyses the reaction 2'-deoxyribonucleotide-(2'-deoxyribose 5'-phosphate)-2'-deoxyribonucleotide-DNA = a 3'-end 2'-deoxyribonucleotide-(2,3-dehydro-2,3-deoxyribose 5'-phosphate)-DNA + a 5'-end 5'-phospho-2'-deoxyribonucleoside-DNA + H(+). Functionally, involved in base excision repair of DNA damaged by oxidation or by mutagenic agents. Acts as a DNA glycosylase that recognizes and removes damaged bases. Has a preference for oxidized purines, such as 7,8-dihydro-8-oxoguanine (8-oxoG). Has AP (apurinic/apyrimidinic) lyase activity and introduces nicks in the DNA strand. Cleaves the DNA backbone by beta-delta elimination to generate a single-strand break at the site of the removed base with both 3'- and 5'-phosphates. This chain is Formamidopyrimidine-DNA glycosylase, found in Acidovorax ebreus (strain TPSY) (Diaphorobacter sp. (strain TPSY)).